A 458-amino-acid chain; its full sequence is Elongation factor 1-alpha (458 aa).

G2 carries the n,N,N-trimethylglycine modification. K3 bears the N6,N6-dimethyllysine; alternate mark. N6-methyllysine; alternate is present on K3. In terms of domain architecture, tr-type G spans 5-240; it reads KTHVNVVVIG…DAIDPPQRPS (236 aa). Residues 14–21 are G1; sequence GHVDSGKS. A GTP-binding site is contributed by 14 to 21; sequence GHVDSGKS. K30 is modified (N6-methyllysine). The interval 70-74 is G2; the sequence is GITID. At K79 the chain carries N6,N6,N6-trimethyllysine. Positions 91-94 are G3; it reads DAPG. Residues 91 to 95 and 153 to 156 contribute to the GTP site; these read DAPGH and NKMD. Residues 153-156 form a G4 region; that stretch reads NKMD. The G5 stretch occupies residues 192-194; that stretch reads SGW. Position 316 is an N6,N6-dimethyllysine; alternate (K316). At K316 the chain carries N6-methyllysine; alternate. An N6-methyllysine modification is found at K390.

The protein belongs to the TRAFAC class translation factor GTPase superfamily. Classic translation factor GTPase family. EF-Tu/EF-1A subfamily.

The protein localises to the cytoplasm. In terms of biological role, this protein promotes the GTP-dependent binding of aminoacyl-tRNA to the A-site of ribosomes during protein biosynthesis. This is Elongation factor 1-alpha (TEF-1) from Absidia glauca (Pin mould).